The chain runs to 331 residues: XylDLEGF operon transcriptional activator 1 (331 aa).

An HTH araC/xylS-type domain is found at 214–315 (ERVVQFIEEN…GELPSDTLRR (102 aa)). DNA-binding regions (H-T-H motif) lie at residues 231–252 (ERLA…EKHA) and 282–305 (VTEM…RSTF).

Its subcellular location is the cytoplasm. Its function is as follows. Regulatory protein of the TOL plasmid xyl operons. XylS activates the xylXYZLTEGFJQKIH operon required for the degradation of toluene, m-xylene and p-xylene. This Pseudomonas putida (Arthrobacter siderocapsulatus) protein is XylDLEGF operon transcriptional activator 1 (xylS1).